Consider the following 407-residue polypeptide: Dephospho-CoA kinase (407 aa).

In terms of domain architecture, DPCK spans 3–204 (RIGLTGGIGA…QPFAHNLAQR (202 aa)). 11–16 (GAGKSL) is an ATP binding site. The interval 196-407 (PFAHNLAQRQ…EWADAVHWRP (212 aa)) is UPF0157.

This sequence in the N-terminal section; belongs to the CoaE family. The protein in the C-terminal section; belongs to the UPF0157 (GrpB) family.

It localises to the cytoplasm. It carries out the reaction 3'-dephospho-CoA + ATP = ADP + CoA + H(+). It participates in cofactor biosynthesis; coenzyme A biosynthesis; CoA from (R)-pantothenate: step 5/5. Catalyzes the phosphorylation of the 3'-hydroxyl group of dephosphocoenzyme A to form coenzyme A. The sequence is that of Dephospho-CoA kinase from Mycobacterium bovis (strain ATCC BAA-935 / AF2122/97).